The following is a 389-amino-acid chain: Phosphopentomutase (389 aa).

Asp9, Asp282, His287, Asp323, His324, and His335 together coordinate Mn(2+).

Belongs to the phosphopentomutase family. The cofactor is Mn(2+).

It localises to the cytoplasm. The enzyme catalyses 2-deoxy-alpha-D-ribose 1-phosphate = 2-deoxy-D-ribose 5-phosphate. It catalyses the reaction alpha-D-ribose 1-phosphate = D-ribose 5-phosphate. Its pathway is carbohydrate degradation; 2-deoxy-D-ribose 1-phosphate degradation; D-glyceraldehyde 3-phosphate and acetaldehyde from 2-deoxy-alpha-D-ribose 1-phosphate: step 1/2. Functionally, isomerase that catalyzes the conversion of deoxy-ribose 1-phosphate (dRib-1-P) and ribose 1-phosphate (Rib-1-P) to deoxy-ribose 5-phosphate (dRib-5-P) and ribose 5-phosphate (Rib-5-P), respectively. This Pseudothermotoga lettingae (strain ATCC BAA-301 / DSM 14385 / NBRC 107922 / TMO) (Thermotoga lettingae) protein is Phosphopentomutase.